An 85-amino-acid polypeptide reads, in one-letter code: UPF0386 protein Plav_1374 (85 aa).

It belongs to the UPF0386 family.

In Parvibaculum lavamentivorans (strain DS-1 / DSM 13023 / NCIMB 13966), this protein is UPF0386 protein Plav_1374.